A 359-amino-acid polypeptide reads, in one-letter code: Phospho-N-acetylmuramoyl-pentapeptide-transferase (359 aa).

10 helical membrane-spanning segments follow: residues 3-23 (QILIAVAIALAVAILLTPVLI), 55-75 (VAIIAGIWVSYFGTHLVGVLM), 84-104 (GLLVLGLATSLGVVGFLDDLI), 117-137 (TAKTVGILVAAVLFGVLALQF), 156-176 (IATVTLAPAVFVLFCVVVVSA), 190-210 (LAAGAMAMVCAAYVLITFWQF), 231-251 (LAIIAAATAGACIGFLWWNAA), 255-275 (IFMGDTGSLALGGIIAGLSVT), 283-303 (VVLGALFVAEVTSVVVQILAF), and 330-350 (VIIRFWLLTAIACGLGVALFY).

It belongs to the glycosyltransferase 4 family. MraY subfamily. Mg(2+) serves as cofactor.

It is found in the cell membrane. The catalysed reaction is UDP-N-acetyl-alpha-D-muramoyl-L-alanyl-gamma-D-glutamyl-meso-2,6-diaminopimeloyl-D-alanyl-D-alanine + di-trans,octa-cis-undecaprenyl phosphate = di-trans,octa-cis-undecaprenyl diphospho-N-acetyl-alpha-D-muramoyl-L-alanyl-D-glutamyl-meso-2,6-diaminopimeloyl-D-alanyl-D-alanine + UMP. The protein operates within cell wall biogenesis; peptidoglycan biosynthesis. In terms of biological role, catalyzes the initial step of the lipid cycle reactions in the biosynthesis of the cell wall peptidoglycan: transfers peptidoglycan precursor phospho-MurNAc-pentapeptide from UDP-MurNAc-pentapeptide onto the lipid carrier undecaprenyl phosphate, yielding undecaprenyl-pyrophosphoryl-MurNAc-pentapeptide, known as lipid I. The protein is Phospho-N-acetylmuramoyl-pentapeptide-transferase of Mycolicibacterium gilvum (strain PYR-GCK) (Mycobacterium gilvum (strain PYR-GCK)).